A 120-amino-acid polypeptide reads, in one-letter code: Glycine cleavage system H protein (120 aa).

The region spanning 17 to 99 is the Lipoyl-binding domain; the sequence is VATVGITNYA…QGAGWFFKLK (83 aa). Residue K58 is modified to N6-lipoyllysine.

This sequence belongs to the GcvH family. As to quaternary structure, the glycine cleavage system is composed of four proteins: P, T, L and H. Requires (R)-lipoate as cofactor.

In terms of biological role, the glycine cleavage system catalyzes the degradation of glycine. The H protein shuttles the methylamine group of glycine from the P protein to the T protein. The protein is Glycine cleavage system H protein of Rhizobium etli (strain ATCC 51251 / DSM 11541 / JCM 21823 / NBRC 15573 / CFN 42).